The primary structure comprises 153 residues: Peptidoglycan-associated lipoprotein (153 aa).

The first 19 residues, 1 to 19 (MNKFVKSLLVAGSVAALAA), serve as a signal peptide directing secretion. Cys20 carries the N-palmitoyl cysteine lipid modification. Cys20 carries the S-diacylglycerol cysteine lipid modification. Residues 40-153 (SVADLQQRYN…SKNRRAVLAY (114 aa)) form the OmpA-like domain. Peptidoglycan binding stretches follow at residues 55-56 (FD) and 97-101 (YNIAL).

This sequence belongs to the Pal lipoprotein family. In terms of assembly, the Tol-Pal system is composed of five core proteins: the inner membrane proteins TolA, TolQ and TolR, the periplasmic protein TolB and the outer membrane protein Pal. They form a network linking the inner and outer membranes and the peptidoglycan layer.

It is found in the cell outer membrane. Functionally, part of the Tol-Pal system, which plays a role in outer membrane invagination during cell division and is important for maintaining outer membrane integrity. The polypeptide is Peptidoglycan-associated lipoprotein (Haemophilus influenzae (strain ATCC 51907 / DSM 11121 / KW20 / Rd)).